Consider the following 310-residue polypeptide: Tagatose-6-phosphate kinase (310 aa).

The protein belongs to the carbohydrate kinase PfkB family. LacC subfamily.

The enzyme catalyses D-tagatofuranose 6-phosphate + ATP = D-tagatofuranose 1,6-bisphosphate + ADP + H(+). Its pathway is carbohydrate metabolism; D-tagatose 6-phosphate degradation; D-glyceraldehyde 3-phosphate and glycerone phosphate from D-tagatose 6-phosphate: step 1/2. The protein is Tagatose-6-phosphate kinase of Staphylococcus epidermidis (strain ATCC 35984 / DSM 28319 / BCRC 17069 / CCUG 31568 / BM 3577 / RP62A).